The primary structure comprises 907 residues: Clumping factor B (907 aa).

The N-terminal stretch at 1–44 is a signal peptide; the sequence is MKKRIDYLSNKQNKYSIRRFTVGTTSVIVGATILFGIGNHQAQA. The short motif at 15 to 26 is the YSIRK-G/S signaling motif element; it reads YSIRRFTVGTTS. 2 stretches are compositionally biased toward polar residues: residues 44-61 and 68-101; these read ASEQ…NASA and MIET…KPMS. Residues 44–191 form a disordered region; that stretch reads ASEQSNDTTQ…AQGTSKPSVR (148 aa). Residues 45–542 form a ligand binding A region region; the sequence is SEQSNDTTQS…GSADGDSAVN (498 aa). Positions 102–119 are enriched in low complexity; it reads TQTSNTTTTEPASTNETP. Positions 134–189 are enriched in polar residues; that stretch reads QDQTVPQEANSQVDNKTTNDANSIATNSELKNPQTLDLPQSSPQTISNAQGTSKPS. The short motif at 272–276 is the MIDAS-like motif element; that stretch reads DYSNS. The disordered stretch occupies residues 530–879; that stretch reads YGGGSADGDS…ETGDKSENTN (350 aa). A compositionally biased stretch (pro residues) spans 545-555; the sequence is DPTPGPPVDPE. A compositionally biased stretch (acidic residues) spans 556-831; it reads PSPDPEPEPS…SDSDSDSDSD (276 aa). Over residues 835–846 the composition is skewed to polar residues; sequence RVTPPNNEQKAP. Residues 863–876 show a composition bias toward basic and acidic residues; it reads HKTDALPETGDKSE. Positions 868–872 match the LPXTG sorting signal motif; that stretch reads LPETG. A Pentaglycyl murein peptidoglycan amidated threonine modification is found at Thr-871. Positions 872-907 are cleaved as a propeptide — removed by sortase; sequence GDKSENTNATLFGAMMALLGSLLLFRKRKQDHKEKA.

This sequence belongs to the serine-aspartate repeat-containing protein (SDr) family. Proteolytically cleaved by aureolysin (aur). This cleavage leads to the inactivation of ClfB.

The protein resides in the secreted. It is found in the cell wall. In terms of biological role, cell surface-associated protein implicated in virulence by promoting bacterial attachment to both alpha- and beta-chains of human fibrinogen and inducing the formation of bacterial clumps. The protein is Clumping factor B (clfB) of Staphylococcus aureus (strain MW2).